A 156-amino-acid chain; its full sequence is Arginine repressor (156 aa).

Belongs to the ArgR family.

It is found in the cytoplasm. It participates in amino-acid biosynthesis; L-arginine biosynthesis [regulation]. Regulates arginine biosynthesis genes. In Vibrio atlanticus (strain LGP32) (Vibrio splendidus (strain Mel32)), this protein is Arginine repressor.